The following is a 499-amino-acid chain: MTTTLPAYDEVVARYEPVIGLETHVELGTNTKMFCGCPTDFGGAPNTRVCPVCLGLPGSLPVANRAAVEATIRIGLALNCSIAEWCRFARKNYYYPDMPKNYQISQYDEPLCVDGYLDVEVDGEPVRISIERVHMEEDTGKTLHVGGATGRIHGATESLVDYNRAGIPLVEIVTKPIPGAGAMAPEVARAYVTELRDVLRSLGVSDVRMEEGSLRCDVNTSLNLPGEQWGTRTETKNVNSLRSVERAVRSEMIRQASVLEGGGRITQETRHFHEDTGDTTSGRSKETATDYRYFPEPDLVPVAPDPTWVAELKAALPELPRLHRRRLQQEWGLSDLDMQSILNAGAVELIEATIAAGATPTAARKWWLGELSRRANEAGVELADIGATPEQVAELQGLVDAGKLTDKLARTVLEHVVAGEGSPAKIMADRNLEVVSDTGALTAAVDEAIAANPAIADKVRGGKVAAAGALVGAVMKTTRGQADAKTVRELILERLGVQG.

The protein belongs to the GatB/GatE family. GatB subfamily. Heterotrimer of A, B and C subunits.

It carries out the reaction L-glutamyl-tRNA(Gln) + L-glutamine + ATP + H2O = L-glutaminyl-tRNA(Gln) + L-glutamate + ADP + phosphate + H(+). The enzyme catalyses L-aspartyl-tRNA(Asn) + L-glutamine + ATP + H2O = L-asparaginyl-tRNA(Asn) + L-glutamate + ADP + phosphate + 2 H(+). Its function is as follows. Allows the formation of correctly charged Asn-tRNA(Asn) or Gln-tRNA(Gln) through the transamidation of misacylated Asp-tRNA(Asn) or Glu-tRNA(Gln) in organisms which lack either or both of asparaginyl-tRNA or glutaminyl-tRNA synthetases. The reaction takes place in the presence of glutamine and ATP through an activated phospho-Asp-tRNA(Asn) or phospho-Glu-tRNA(Gln). The protein is Aspartyl/glutamyl-tRNA(Asn/Gln) amidotransferase subunit B of Salinispora tropica (strain ATCC BAA-916 / DSM 44818 / JCM 13857 / NBRC 105044 / CNB-440).